The chain runs to 160 residues: 2-C-methyl-D-erythritol 2,4-cyclodiphosphate synthase (160 aa).

Aspartate 11 and histidine 13 together coordinate a divalent metal cation. 4-CDP-2-C-methyl-D-erythritol 2-phosphate-binding positions include 11 to 13 (DVH) and 37 to 38 (HS). Histidine 45 contributes to the a divalent metal cation binding site. 4-CDP-2-C-methyl-D-erythritol 2-phosphate contacts are provided by residues 59–61 (DIG), 64–68 (FPDTD), 103–109 (AQAPKMA), 135–138 (TTTE), phenylalanine 142, and arginine 145.

This sequence belongs to the IspF family. As to quaternary structure, homotrimer. Requires a divalent metal cation as cofactor.

The catalysed reaction is 4-CDP-2-C-methyl-D-erythritol 2-phosphate = 2-C-methyl-D-erythritol 2,4-cyclic diphosphate + CMP. Its pathway is isoprenoid biosynthesis; isopentenyl diphosphate biosynthesis via DXP pathway; isopentenyl diphosphate from 1-deoxy-D-xylulose 5-phosphate: step 4/6. Functionally, involved in the biosynthesis of isopentenyl diphosphate (IPP) and dimethylallyl diphosphate (DMAPP), two major building blocks of isoprenoid compounds. Catalyzes the conversion of 4-diphosphocytidyl-2-C-methyl-D-erythritol 2-phosphate (CDP-ME2P) to 2-C-methyl-D-erythritol 2,4-cyclodiphosphate (ME-CPP) with a corresponding release of cytidine 5-monophosphate (CMP). This chain is 2-C-methyl-D-erythritol 2,4-cyclodiphosphate synthase, found in Thioalkalivibrio sulfidiphilus (strain HL-EbGR7).